The sequence spans 554 residues: Undecaprenyl phosphate-alpha-4-amino-4-deoxy-L-arabinose arabinosyl transferase (554 aa).

Transmembrane regions (helical) follow at residues 4–24 (LKGS…LLPI), 87–107 (FGSI…ATLL), 115–135 (FLAA…SYAV), 178–198 (FMTK…PIVI), 206–226 (LIIF…PWAL), 262–282 (YLPI…AALL), 293–313 (ELFF…VAKG), 315–335 (LPTY…AYAT), 352–372 (INLI…MGWV), 384–404 (QKVI…FATM), and 410–430 (HWHW…YLIP).

Belongs to the glycosyltransferase 83 family.

It is found in the cell inner membrane. It carries out the reaction 4-amino-4-deoxy-alpha-L-arabinopyranosyl di-trans,octa-cis-undecaprenyl phosphate + lipid IVA = lipid IIA + di-trans,octa-cis-undecaprenyl phosphate.. It functions in the pathway lipopolysaccharide metabolism; 4-amino-4-deoxy-beta-L-arabinose-lipid A biosynthesis. Functionally, catalyzes the transfer of the L-Ara4N moiety of the glycolipid undecaprenyl phosphate-alpha-L-Ara4N to lipid A. The modified arabinose is attached to lipid A and is required for resistance to polymyxin and cationic antimicrobial peptides. The chain is Undecaprenyl phosphate-alpha-4-amino-4-deoxy-L-arabinose arabinosyl transferase from Yersinia enterocolitica serotype O:8 / biotype 1B (strain NCTC 13174 / 8081).